The following is a 467-amino-acid chain: ATP synthase subunit beta (467 aa).

Position 150-157 (150-157) interacts with ATP; sequence GGAGVGKT.

Belongs to the ATPase alpha/beta chains family. In terms of assembly, F-type ATPases have 2 components, CF(1) - the catalytic core - and CF(0) - the membrane proton channel. CF(1) has five subunits: alpha(3), beta(3), gamma(1), delta(1), epsilon(1). CF(0) has three main subunits: a(1), b(2) and c(9-12). The alpha and beta chains form an alternating ring which encloses part of the gamma chain. CF(1) is attached to CF(0) by a central stalk formed by the gamma and epsilon chains, while a peripheral stalk is formed by the delta and b chains.

The protein localises to the cell inner membrane. It carries out the reaction ATP + H2O + 4 H(+)(in) = ADP + phosphate + 5 H(+)(out). In terms of biological role, produces ATP from ADP in the presence of a proton gradient across the membrane. The catalytic sites are hosted primarily by the beta subunits. This Aliivibrio salmonicida (strain LFI1238) (Vibrio salmonicida (strain LFI1238)) protein is ATP synthase subunit beta.